A 156-amino-acid polypeptide reads, in one-letter code: 6,7-dimethyl-8-ribityllumazine synthase (156 aa).

5-amino-6-(D-ribitylamino)uracil-binding positions include phenylalanine 22, alanine 56–glutamate 58, and alanine 80–isoleucine 82. Aspartate 85–threonine 86 provides a ligand contact to (2S)-2-hydroxy-3-oxobutyl phosphate. Histidine 88 serves as the catalytic Proton donor. Residue phenylalanine 113 coordinates 5-amino-6-(D-ribitylamino)uracil. Arginine 127 is a (2S)-2-hydroxy-3-oxobutyl phosphate binding site.

Belongs to the DMRL synthase family.

It carries out the reaction (2S)-2-hydroxy-3-oxobutyl phosphate + 5-amino-6-(D-ribitylamino)uracil = 6,7-dimethyl-8-(1-D-ribityl)lumazine + phosphate + 2 H2O + H(+). Its pathway is cofactor biosynthesis; riboflavin biosynthesis; riboflavin from 2-hydroxy-3-oxobutyl phosphate and 5-amino-6-(D-ribitylamino)uracil: step 1/2. Functionally, catalyzes the formation of 6,7-dimethyl-8-ribityllumazine by condensation of 5-amino-6-(D-ribitylamino)uracil with 3,4-dihydroxy-2-butanone 4-phosphate. This is the penultimate step in the biosynthesis of riboflavin. The polypeptide is 6,7-dimethyl-8-ribityllumazine synthase (Leuconostoc mesenteroides subsp. mesenteroides (strain ATCC 8293 / DSM 20343 / BCRC 11652 / CCM 1803 / JCM 6124 / NCDO 523 / NBRC 100496 / NCIMB 8023 / NCTC 12954 / NRRL B-1118 / 37Y)).